The primary structure comprises 922 residues: Disintegrin and metalloproteinase domain-containing protein 10 homolog (922 aa).

The N-terminal stretch at methionine 1–glycine 26 is a signal peptide. The propeptide occupies leucine 27–arginine 228. N-linked (GlcNAc...) asparagine glycosylation is found at asparagine 74, asparagine 185, and asparagine 346. Over alanine 229 to asparagine 745 the chain is Extracellular. Positions arginine 242–leucine 480 constitute a Peptidase M12B domain. Histidine 426 contacts Zn(2+). Residue glutamate 427 is part of the active site. Positions 430 and 436 each coordinate Zn(2+). Cysteine 442 and cysteine 471 are oxidised to a cystine. An N-linked (GlcNAc...) asparagine glycan is attached at asparagine 475. Positions serine 511–aspartate 615 constitute a Disintegrin domain. 5 disulfides stabilise this stretch: cysteine 542/cysteine 577, cysteine 564/cysteine 572, cysteine 588/cysteine 607, cysteine 594/cysteine 626, and cysteine 619/cysteine 631. Asparagine 632 is a glycosylation site (N-linked (GlcNAc...) asparagine). Intrachain disulfides connect cysteine 636–cysteine 659, cysteine 644–cysteine 665, cysteine 655–cysteine 707, and cysteine 700–cysteine 713. The N-linked (GlcNAc...) asparagine glycan is linked to asparagine 677. A helical transmembrane segment spans residues tryptophan 746–cysteine 766. Topologically, residues cysteine 767–lysine 922 are cytoplasmic. Disordered stretches follow at residues glutamine 797–proline 837 and proline 864–lysine 922. The segment covering alanine 805–proline 834 has biased composition (low complexity).

As to quaternary structure, may interact with tetraspanin tsp-12; the interaction promotes sup-17 cell membrane localization. Zn(2+) serves as cofactor. As to expression, expressed in the germline.

It localises to the cell membrane. Its subcellular location is the basolateral cell membrane. It is found in the cytoplasmic vesicle membrane. It catalyses the reaction Endopeptidase of broad specificity.. Its function is as follows. Metalloprotease. Acts together with protease adm-4 and in a cell autonomous manner to facilitate lin-12/Notch signaling during developmental cell fate decision, including anchor cell/ventral uterine precursor cell decision and vulva precursor cell specification. By modulating glp-1/Notch signaling, plays a role in germline development. Probably by modulating BMP-like Sma/Mab signaling via the shedding of unc-40 ectodomain, involved in the regulation of body size and mesoderm development. Probably by shedding ephrin efn-4, regulates axon guidance of SDQL neuron during development. The sequence is that of Disintegrin and metalloproteinase domain-containing protein 10 homolog from Caenorhabditis elegans.